A 198-amino-acid polypeptide reads, in one-letter code: FMN-dependent NADH:quinone oxidoreductase 6 (198 aa).

96-99 (MYNF) serves as a coordination point for FMN.

Belongs to the azoreductase type 1 family. In terms of assembly, homodimer. The cofactor is FMN.

It catalyses the reaction 2 a quinone + NADH + H(+) = 2 a 1,4-benzosemiquinone + NAD(+). The enzyme catalyses N,N-dimethyl-1,4-phenylenediamine + anthranilate + 2 NAD(+) = 2-(4-dimethylaminophenyl)diazenylbenzoate + 2 NADH + 2 H(+). Functionally, quinone reductase that provides resistance to thiol-specific stress caused by electrophilic quinones. In terms of biological role, also exhibits azoreductase activity. Catalyzes the reductive cleavage of the azo bond in aromatic azo compounds to the corresponding amines. The protein is FMN-dependent NADH:quinone oxidoreductase 6 of Burkholderia lata (strain ATCC 17760 / DSM 23089 / LMG 22485 / NCIMB 9086 / R18194 / 383).